Here is a 149-residue protein sequence, read N- to C-terminus: uncharacterized protein (149 aa).

The region spanning 2–146 (LEVKTISVED…NHIVMYKTLR (145 aa)) is the N-acetyltransferase domain.

It belongs to the acetyltransferase family.

This is an uncharacterized protein from Bacillus subtilis (strain 168).